The primary structure comprises 1006 residues: MDVRCINWFESHGENRFLYLKSRCRNGETVFIRFPHYFYYVVTDEIYQSLSPPPFNARPMGKMRTIDIDETISYNLDIKDRKCSVADMWLIEEPKKRSIQNATMDEFLNISWFYISNGISPDGCYSLDEQYLTKINNGCYHCDDPRNCFAKEIPRFDIPRSYLFLDIECHFDKKFPSVFINPISHTSYCYIDLSGKRLLFTLINEEMLTEQEIQEAVDRGCLRIQSLMEMDYERELVLCSEIVLLRIAKQLLELTFDYVVTFNGHNFDLRYITNRLELLTGEKIIFRSPDKKEAVHLCIYERNQSSHKGVCGMANTTFHVNNNNGTIFFDLYSFIQKSEKLDSYKLDSISKNAFSCMGKVLNRGVREMTFIGDDTTDAKGKADTFAKVLTTGNYVTVDEDIICKVIRKDILENGFKVVLSCPTLPNDIYKLSFGKDDIDLAQMYKDYNLNIALDMARYCIHDACLCQYLWEYYGVETKTDAGAATYVLPQSMVFEYRASTIIKGPLLKLLLETKTILVRSETKQKFPYEGGKVFAPKQKMFSNNVLIFDYNSLYPNVCIFGNLSPETLVGVVVSTNRLEEEINNQLLLQKYPPPRYITVHCEPRLPNLISEIAIFDRSIEGTIPRLLRTFLAERARYKKMLKQATSSTEKAIYDSMQYTYKIVANSVYGLMGFRNSALYSYASAKSCTSIGRRMILYLESVLNGAELSNGMLRFANTLSNPFYMDDRDINPIVKTSLPIDYRFRFRSVYGDTDSVFTEIDSQDVDKSIEIAKELERLINSRVLFNNFKIEFEAVYKNLIMQSKKKYTTMKYSASSNSKSVPERINKGTSETRRDVSKFHKNMIKTYKTRLSEMLSEGRMNSNQVCIDILRSLETDLRSEFDSRSSPLELFMLSRMHHSNYKSADNPNMYLVTEYNKNNPETIELGERYYFAYICPANVPWTKKLVNIKTYETIIDRSFKLGSNQRIFYEVYFKRLTSEIVNLLDNKVLCISFFQRMFGSRPTFYEA.

The protein belongs to the DNA polymerase type-B family. As to quaternary structure, interacts with OPG148. Component of the Uracil-DNA glycosylase(UDG)-OPG148-polymerase complex; OPG148 and OPG116/UDG form a heterodimeric processivity factor that associates with OPG071 to form the processive polymerase holoenzyme.

The catalysed reaction is DNA(n) + a 2'-deoxyribonucleoside 5'-triphosphate = DNA(n+1) + diphosphate. Catalyzes DNA synthesis. Acquires processivity by associating with a heterodimeric processivity factor comprised of the viral OPG148 and OPG116 proteins, thereby forming the DNA polymerase holoenzyme. Displays 3'- to 5' exonuclease activity. Might participate in viral DNA recombination. Does not perform OPG116/D4synthesis across an abasic site. The polypeptide is DNA polymerase (OPG071) (Monkeypox virus).